Reading from the N-terminus, the 124-residue chain is Desulfoferrodoxin homolog (124 aa).

Residues C10, C13, C29, C30, H49, H69, H75, C117, and H120 each contribute to the Fe cation site.

It belongs to the desulfoferrodoxin family. The cofactor is Fe(3+). It depends on Cu(2+) as a cofactor.

The polypeptide is Desulfoferrodoxin homolog (Methanothermobacter thermautotrophicus (strain ATCC 29096 / DSM 1053 / JCM 10044 / NBRC 100330 / Delta H) (Methanobacterium thermoautotrophicum)).